The following is a 199-amino-acid chain: Thioredoxin reductase-like selenoprotein T (199 aa).

A signal peptide spans 1 to 24; sequence MRAAGLGLGIGLLLLAALAGPGGS. Residues 50–53 constitute a cross-link (cysteinyl-selenocysteine (Cys-Sec)); sequence CVSU. Residue selenocysteine 53 is a non-standard amino acid, selenocysteine. A helical transmembrane segment spans residues 95–115; that stretch reads VFKLVLIGLIIVGKDPFAFFG.

Belongs to the SelWTH family. Selenoprotein T subfamily. May contain a selenide-sulfide bond between Cys-50 and Sec-53. This bond is speculated to serve as redox-active pair.

The protein localises to the endoplasmic reticulum membrane. The enzyme catalyses [thioredoxin]-dithiol + NADP(+) = [thioredoxin]-disulfide + NADPH + H(+). Functionally, selenoprotein with thioredoxin reductase-like oxidoreductase activity. The chain is Thioredoxin reductase-like selenoprotein T from Gallus gallus (Chicken).